The primary structure comprises 120 residues: Immunoglobulin lambda variable 2-14 (120 aa).

The first 19 residues, 1-19 (MAWALLLLTLLTQGTGSWA), serve as a signal peptide directing secretion. The residue at position 20 (Q20) is a Pyrrolidone carboxylic acid. The interval 20–44 (QSALTQPASVSGSPGQSITISCTGT) is framework-1. In terms of domain architecture, Ig-like spans 20–119 (QSALTQPASV…SSYTSSSTLH (100 aa)). C41 and C109 are joined by a disulfide. The tract at residues 45-53 (SSDVGGYNY) is complementarity-determining-1. Residues 54 to 70 (VSWYQQHPGKAPKLMIY) form a framework-2 region. The tract at residues 71–73 (EVS) is complementarity-determining-2. The tract at residues 74–109 (NRPSGVSNRFSGSKSGNTASLTISGLQAEDEADYYC) is framework-3. The interval 110-119 (SSYTSSSTLH) is complementarity-determining-3.

As to quaternary structure, immunoglobulins are composed of two identical heavy chains and two identical light chains; disulfide-linked.

Its subcellular location is the secreted. It is found in the cell membrane. In terms of biological role, v region of the variable domain of immunoglobulin light chains that participates in the antigen recognition. Immunoglobulins, also known as antibodies, are membrane-bound or secreted glycoproteins produced by B lymphocytes. In the recognition phase of humoral immunity, the membrane-bound immunoglobulins serve as receptors which, upon binding of a specific antigen, trigger the clonal expansion and differentiation of B lymphocytes into immunoglobulins-secreting plasma cells. Secreted immunoglobulins mediate the effector phase of humoral immunity, which results in the elimination of bound antigens. The antigen binding site is formed by the variable domain of one heavy chain, together with that of its associated light chain. Thus, each immunoglobulin has two antigen binding sites with remarkable affinity for a particular antigen. The variable domains are assembled by a process called V-(D)-J rearrangement and can then be subjected to somatic hypermutations which, after exposure to antigen and selection, allow affinity maturation for a particular antigen. The sequence is that of Immunoglobulin lambda variable 2-14 from Homo sapiens (Human).